The sequence spans 374 residues: Histidinol-phosphate aminotransferase (374 aa).

The residue at position 215 (K215) is an N6-(pyridoxal phosphate)lysine.

Belongs to the class-II pyridoxal-phosphate-dependent aminotransferase family. Histidinol-phosphate aminotransferase subfamily. As to quaternary structure, homodimer. Requires pyridoxal 5'-phosphate as cofactor.

It catalyses the reaction L-histidinol phosphate + 2-oxoglutarate = 3-(imidazol-4-yl)-2-oxopropyl phosphate + L-glutamate. Its pathway is amino-acid biosynthesis; L-histidine biosynthesis; L-histidine from 5-phospho-alpha-D-ribose 1-diphosphate: step 7/9. In Yersinia enterocolitica serotype O:8 / biotype 1B (strain NCTC 13174 / 8081), this protein is Histidinol-phosphate aminotransferase.